Reading from the N-terminus, the 375-residue chain is Protein SSUH2 homolog (375 aa).

As to expression, expressed in enterocytes of small and large intestinal mucosa (at protein level). Expressed in chromaffine and interstitial cells. Expressed in peripheral blood and gingival cells.

It localises to the cytoplasm. The protein resides in the nucleus. In terms of biological role, plays a role in odontogenesis. This is Protein SSUH2 homolog from Homo sapiens (Human).